The primary structure comprises 66 residues: ATP synthase protein 8 (66 aa).

The helical transmembrane segment at 8–24 threads the bilayer; sequence PWPMVIMSMILTLFYIT. K54 is modified (N6-acetyllysine; alternate). The residue at position 54 (K54) is an N6-succinyllysine; alternate. K57 is modified (N6-acetyllysine).

Belongs to the ATPase protein 8 family. As to quaternary structure, F-type ATPases have 2 components, CF(1) - the catalytic core - and CF(0) - the membrane proton channel. Component of an ATP synthase complex composed of ATP5PB, ATP5MC1, ATP5F1E, ATP5PD, ATP5ME, ATP5PF, ATP5MF, MT-ATP6, MT-ATP8, ATP5F1A, ATP5F1B, ATP5F1D, ATP5F1C, ATP5PO, ATP5MG, ATP5MK and ATP5MJ. Interacts with PRICKLE3.

It localises to the mitochondrion membrane. Its function is as follows. Mitochondrial membrane ATP synthase (F(1)F(0) ATP synthase or Complex V) produces ATP from ADP in the presence of a proton gradient across the membrane which is generated by electron transport complexes of the respiratory chain. F-type ATPases consist of two structural domains, F(1) - containing the extramembraneous catalytic core and F(0) - containing the membrane proton channel, linked together by a central stalk and a peripheral stalk. During catalysis, ATP synthesis in the catalytic domain of F(1) is coupled via a rotary mechanism of the central stalk subunits to proton translocation. Part of the complex F(0) domain. Minor subunit located with subunit a in the membrane. The sequence is that of ATP synthase protein 8 (MT-ATP8) from Alouatta sara (Bolivian red howler monkey).